Here is a 387-residue protein sequence, read N- to C-terminus: Exodeoxyribonuclease 7 large subunit (387 aa).

Belongs to the XseA family. As to quaternary structure, heterooligomer composed of large and small subunits.

The protein localises to the cytoplasm. It carries out the reaction Exonucleolytic cleavage in either 5'- to 3'- or 3'- to 5'-direction to yield nucleoside 5'-phosphates.. Bidirectionally degrades single-stranded DNA into large acid-insoluble oligonucleotides, which are then degraded further into small acid-soluble oligonucleotides. This is Exodeoxyribonuclease 7 large subunit from Parasynechococcus marenigrum (strain WH8102).